The following is a 359-amino-acid chain: ATPase ASNA1 homolog (359 aa).

23–30 provides a ligand contact to ATP; that stretch reads KGGVGKTT. The active site involves aspartate 63. Positions 252 and 279 each coordinate ATP. Zn(2+) is bound by residues cysteine 291 and cysteine 294.

It belongs to the arsA ATPase family. Homodimer.

It localises to the cytoplasm. Its subcellular location is the endoplasmic reticulum. Its function is as follows. ATPase required for the post-translational delivery of tail-anchored (TA) proteins to the endoplasmic reticulum. Recognizes and selectively binds the transmembrane domain of TA proteins in the cytosol. This complex then targets to the endoplasmic reticulum by membrane-bound receptors, where the tail-anchored protein is released for insertion. This process is regulated by ATP binding and hydrolysis. ATP binding drives the homodimer towards the closed dimer state, facilitating recognition of newly synthesized TA membrane proteins. ATP hydrolysis is required for insertion. Subsequently, the homodimer reverts towards the open dimer state, lowering its affinity for the membrane-bound receptor, and returning it to the cytosol to initiate a new round of targeting. This Trypanosoma cruzi (strain CL Brener) protein is ATPase ASNA1 homolog.